The primary structure comprises 70 residues: Small ribosomal subunit protein bS21 (70 aa).

This sequence belongs to the bacterial ribosomal protein bS21 family.

This Campylobacter hominis (strain ATCC BAA-381 / DSM 21671 / CCUG 45161 / LMG 19568 / NCTC 13146 / CH001A) protein is Small ribosomal subunit protein bS21.